The sequence spans 188 residues: GTP cyclohydrolase 1 (188 aa).

Zn(2+) is bound by residues Cys-78, His-81, and Cys-150.

Belongs to the GTP cyclohydrolase I family. In terms of assembly, toroid-shaped homodecamer, composed of two pentamers of five dimers.

The enzyme catalyses GTP + H2O = 7,8-dihydroneopterin 3'-triphosphate + formate + H(+). The protein operates within cofactor biosynthesis; 7,8-dihydroneopterin triphosphate biosynthesis; 7,8-dihydroneopterin triphosphate from GTP: step 1/1. The protein is GTP cyclohydrolase 1 of Halalkalibacterium halodurans (strain ATCC BAA-125 / DSM 18197 / FERM 7344 / JCM 9153 / C-125) (Bacillus halodurans).